An 89-amino-acid chain; its full sequence is Small ribosomal subunit protein uS15 (89 aa).

Belongs to the universal ribosomal protein uS15 family. Part of the 30S ribosomal subunit. Forms a bridge to the 50S subunit in the 70S ribosome, contacting the 23S rRNA.

Functionally, one of the primary rRNA binding proteins, it binds directly to 16S rRNA where it helps nucleate assembly of the platform of the 30S subunit by binding and bridging several RNA helices of the 16S rRNA. Its function is as follows. Forms an intersubunit bridge (bridge B4) with the 23S rRNA of the 50S subunit in the ribosome. The chain is Small ribosomal subunit protein uS15 from Rhizorhabdus wittichii (strain DSM 6014 / CCUG 31198 / JCM 15750 / NBRC 105917 / EY 4224 / RW1) (Sphingomonas wittichii).